A 401-amino-acid chain; its full sequence is MSWQQFKHAWLIKFWAPIPAVIAAGILSTYYFGITGTFWAVTGEFTRWGGQLLQLFGVHAEEWGYFKIIHLEGSPLTRIDGMMILGMFGGCFAAALWANNVKLRMPRSRIRIMQAIIGGIIAGFGARLAMGCNLAAFFTGIPQFSLHAWFFAIATAIGSWFGARFTLLPIFRIPVKMQKVSAASPLTQKPDQARRRFRLGMLVFFGMLGWALLTAMNQPKLGLAMLFGVGFGLLIERAQICFTSAFRDMWITGRTHMAKAIIIGMAVSAIGIFSYVQLGVEPKIMWAGPNAVIGGLLFGFGIVLAGGCETGWMYRAVEGQVHYWWVGLGNVIGSTILAYYWDDFAPALATDWDKINLLKTFGPMGGLLVTYLLLFAALMLIIGWEKRFFRRAAPQTAKEIA.

At 1–13 (MSWQQFKHAWLIK) the chain is on the cytoplasmic side. Residues 14–34 (FWAPIPAVIAAGILSTYYFGI) traverse the membrane as a helical segment. Topologically, residues 35 to 78 (TGTFWAVTGEFTRWGGQLLQLFGVHAEEWGYFKIIHLEGSPLTR) are periplasmic. Residues 79–99 (IDGMMILGMFGGCFAAALWAN) traverse the membrane as a helical segment. The Cytoplasmic segment spans residues 100 to 115 (NVKLRMPRSRIRIMQA). Residues 116-138 (IIGGIIAGFGARLAMGCNLAAFF) form a helical membrane-spanning segment. Topologically, residues 139 to 147 (TGIPQFSLH) are periplasmic. A helical membrane pass occupies residues 148 to 170 (AWFFAIATAIGSWFGARFTLLPI). Over 171 to 198 (FRIPVKMQKVSAASPLTQKPDQARRRFR) the chain is Cytoplasmic. The helical transmembrane segment at 199–219 (LGMLVFFGMLGWALLTAMNQP) threads the bilayer. At 220-221 (KL) the chain is on the periplasmic side. The chain crosses the membrane as a helical span at residues 222–242 (GLAMLFGVGFGLLIERAQICF). Residues 243–259 (TSAFRDMWITGRTHMAK) are Cytoplasmic-facing. Residues 260 to 280 (AIIIGMAVSAIGIFSYVQLGV) traverse the membrane as a helical segment. At 281–283 (EPK) the chain is on the periplasmic side. A helical membrane pass occupies residues 284–304 (IMWAGPNAVIGGLLFGFGIVL). Topologically, residues 305–320 (AGGCETGWMYRAVEGQ) are cytoplasmic. A helical transmembrane segment spans residues 321–341 (VHYWWVGLGNVIGSTILAYYW). At 342-363 (DDFAPALATDWDKINLLKTFGP) the chain is on the periplasmic side. A helical transmembrane segment spans residues 364–384 (MGGLLVTYLLLFAALMLIIGW). Residues 385–401 (EKRFFRRAAPQTAKEIA) lie on the Cytoplasmic side of the membrane.

The protein belongs to the TsuA/YedE (TC 9.B.102) family.

Its subcellular location is the cell inner membrane. The polypeptide is Probable transporter YedE (yedE) (Escherichia coli (strain K12)).